A 143-amino-acid chain; its full sequence is Transcriptional regulator MraZ (143 aa).

2 consecutive SpoVT-AbrB domains span residues 5 to 47 (EYHH…PIEE) and 76 to 119 (AMES…SAER).

The protein belongs to the MraZ family. Forms oligomers.

The protein localises to the cytoplasm. The protein resides in the nucleoid. The sequence is that of Transcriptional regulator MraZ from Lactobacillus johnsonii (strain CNCM I-12250 / La1 / NCC 533).